A 237-amino-acid chain; its full sequence is 2,3,4,5-tetrahydropyridine-2,6-dicarboxylate N-acetyltransferase (237 aa).

Belongs to the transferase hexapeptide repeat family. DapH subfamily.

It catalyses the reaction (S)-2,3,4,5-tetrahydrodipicolinate + acetyl-CoA + H2O = L-2-acetamido-6-oxoheptanedioate + CoA. It functions in the pathway amino-acid biosynthesis; L-lysine biosynthesis via DAP pathway; LL-2,6-diaminopimelate from (S)-tetrahydrodipicolinate (acetylase route): step 1/3. Functionally, catalyzes the transfer of an acetyl group from acetyl-CoA to tetrahydrodipicolinate. This is 2,3,4,5-tetrahydropyridine-2,6-dicarboxylate N-acetyltransferase from Alkaliphilus metalliredigens (strain QYMF).